The following is an 839-amino-acid chain: A disintegrin and metalloproteinase with thrombospondin motifs 4 (839 aa).

Positions 1–51 are cleaved as a signal peptide; the sequence is MSHMDSHPGRGLADGWLWGIQPRLLLPTVPVSGSRLVWLLLLASLLPSAWP. Positions 52–212 are excised as a propeptide; the sequence is ASPLPREEEI…PSPSPRRAKR (161 aa). Residue asparagine 68 is glycosylated (N-linked (GlcNAc...) asparagine). Residues 166-209 are disordered; sequence EGGAPNSAGGPGAHILRRKSPVSGQGPMCNVKAPPGKPSPSPRR. Residues 192–199 carry the Cysteine switch motif; the sequence is PMCNVKAP. Cysteine 194 serves as a coordination point for Zn(2+). In terms of domain architecture, Peptidase M12B spans 218-428; the sequence is RFVETLVVAD…GFGHCLLDKP (211 aa). Disulfide bonds link cysteine 293/cysteine 345, cysteine 322/cysteine 327, cysteine 339/cysteine 423, cysteine 377/cysteine 407, cysteine 449/cysteine 472, cysteine 460/cysteine 482, cysteine 467/cysteine 501, cysteine 495/cysteine 506, cysteine 532/cysteine 569, cysteine 536/cysteine 574, and cysteine 547/cysteine 559. Residue histidine 361 coordinates Zn(2+). Glutamate 362 is a catalytic residue. Zn(2+) contacts are provided by histidine 365 and histidine 371. The Disintegrin domain maps to 437-519; the sequence is TFPGKDYDAD…DQLQAFNVPQ (83 aa). The 56-residue stretch at 520 to 575 folds into the TSP type-1 domain; sequence AGGWGPWGSWGDCSRSCGGGVQFSSRDCTRPVPRNGGKYCEGRRTRFRSCNTQDCP. A spacer region spans residues 686–839; it reads SKQSGSFKKF…LRRRSWAGRK (154 aa).

Interacts with SRPX2. Zn(2+) serves as cofactor. Post-translationally, the precursor is cleaved by a furin endopeptidase. In terms of processing, glycosylated. Can be O-fucosylated by POFUT2 on a serine or a threonine residue found within the consensus sequence C1-X(2)-(S/T)-C2-G of the TSP type-1 repeat domains where C1 and C2 are the first and second cysteine residue of the repeat, respectively. Fucosylated repeats can then be further glycosylated by the addition of a beta-1,3-glucose residue by the glucosyltransferase, B3GALTL. Fucosylation mediates the efficient secretion of ADAMTS family members. Can also be C-glycosylated with one or two mannose molecules on tryptophan residues within the consensus sequence W-X-X-W of the TPRs, and N-glycosylated. These other glycosylations can also facilitate secretion.

The protein resides in the secreted. It localises to the extracellular space. It is found in the extracellular matrix. It carries out the reaction Glutamyl endopeptidase. Bonds cleaved include 370-Thr-Glu-Gly-Glu-|-Ala-Arg-Gly-Ser-377 in the interglobular domain of mammalian aggrecan.. Functionally, cleaves aggrecan, a cartilage proteoglycan, at the '392-Glu-|-Ala-393' site and may be involved in its turnover. Also cleaves COMP. May play an important role in the destruction of aggrecan in arthritic diseases. The protein is A disintegrin and metalloproteinase with thrombospondin motifs 4 (ADAMTS4) of Bos taurus (Bovine).